The primary structure comprises 39 residues: Photosystem II reaction center protein L (39 aa).

A helical transmembrane segment spans residues 18 to 38; it reads SLYLGLLFVFVTGVLMSSYFF.

Belongs to the PsbL family. As to quaternary structure, PSII is composed of 1 copy each of membrane proteins PsbA, PsbB, PsbC, PsbD, PsbE, PsbF, PsbH, PsbI, PsbJ, PsbK, PsbL, PsbM, PsbT, PsbX, PsbY, PsbZ, Psb30/Ycf12, peripheral proteins PsbO, CyanoQ (PsbQ), PsbU, PsbV and a large number of cofactors. It forms dimeric complexes.

It is found in the cellular thylakoid membrane. One of the components of the core complex of photosystem II (PSII). PSII is a light-driven water:plastoquinone oxidoreductase that uses light energy to abstract electrons from H(2)O, generating O(2) and a proton gradient subsequently used for ATP formation. It consists of a core antenna complex that captures photons, and an electron transfer chain that converts photonic excitation into a charge separation. This subunit is found at the monomer-monomer interface and is required for correct PSII assembly and/or dimerization. This is Photosystem II reaction center protein L from Synechococcus sp. (strain CC9902).